The sequence spans 429 residues: Glucose-1-phosphate adenylyltransferase (429 aa).

Residues Gly162, 177 to 178, and Ser209 each bind alpha-D-glucose 1-phosphate; that span reads EK.

It belongs to the bacterial/plant glucose-1-phosphate adenylyltransferase family. As to quaternary structure, homotetramer.

The catalysed reaction is alpha-D-glucose 1-phosphate + ATP + H(+) = ADP-alpha-D-glucose + diphosphate. It participates in glycan biosynthesis; glycogen biosynthesis. Its activity is regulated as follows. Activated by 3-phosphoglycerate and inhibited by phosphate. Its function is as follows. Involved in the biosynthesis of ADP-glucose, a building block required for the elongation reactions to produce glycogen. Catalyzes the reaction between ATP and alpha-D-glucose 1-phosphate (G1P) to produce pyrophosphate and ADP-Glc. This chain is Glucose-1-phosphate adenylyltransferase, found in Nostoc sp. (strain PCC 7120 / SAG 25.82 / UTEX 2576).